A 242-amino-acid polypeptide reads, in one-letter code: Derlin-1 (242 aa).

Residues 1-20 lie on the Cytoplasmic side of the membrane; sequence MSSPAEYYNSLPPISKAYGT. A helical membrane pass occupies residues 21–41; it reads LCFFATVLCQLQILNPPFLAL. The Lumenal segment spans residues 42–55; it reads YYPFVFKKFQIWRL. Residues 56–76 form a helical membrane-spanning segment; the sequence is FTSFFFLGKFSINFGIRLLMI. At 77–94 the chain is on the cytoplasmic side; sequence ARYGVQLEKGAFEKRTAD. Residues 95–115 form a helical membrane-spanning segment; it reads FLWMMIFGAISLLALSAIPFL. Residues 116–157 lie on the Lumenal side of the membrane; sequence DIYFLGVPMVSMLLYVWSREYPNSQISMYGLVQLRSFYLPWA. A helical membrane pass occupies residues 158–178; the sequence is MLGLDVIFGSEILPGLLGILV. Topologically, residues 179–242 are cytoplasmic; it reads GHTYYFLSVL…FRGRSYRLSQ (64 aa).

This sequence belongs to the derlin family. Seedling shoots and roots.

It localises to the endoplasmic reticulum membrane. May be involved in the degradation process of specific misfolded endoplasmic reticulum (ER) luminal proteins. The protein is Derlin-1 (DER1) of Oryza sativa subsp. japonica (Rice).